The following is a 134-amino-acid chain: MTGGKSGGKASGSKSSAQSRSSKAGLAFPVGRVHRLLRKGNYAQRVGAGAPVYLAAVLEYLAAEILELAGNAARDNKKTRIIPRHLQLAIRNDEELNKLLGHVTIAQGGVLPNIHQNLLPKKTAKPGKGPSQEL.

A compositionally biased stretch (gly residues) spans 1–10 (MTGGKSGGKA). Residues 1-26 (MTGGKSGGKASGSKSSAQSRSSKAGL) form a disordered region. K5 and K9 each carry N6-acetyllysine. Positions 11-25 (SGSKSSAQSRSSKAG) are enriched in low complexity. Q107 is subject to N5-methylglutamine. Phosphoserine is present on S131. The short motif at 131–132 (SQ) is the [ST]-Q motif element.

It belongs to the histone H2A family. As to quaternary structure, the nucleosome is a histone octamer containing two molecules each of H2A, H2B, H3 and H4 assembled in one H3-H4 heterotetramer and two H2A-H2B heterodimers. The octamer wraps approximately 147 bp of DNA. Post-translationally, phosphorylated to form H2AS128ph (gamma-H2A) in response to DNA double-strand breaks (DSBs) generated by exogenous genotoxic agents and by stalled replication forks. Phosphorylation is dependent on the DNA damage checkpoint kinases MEC1/ATR and TEL1/ATM, spreads on either side of a detected DSB site and may mark the surrounding chromatin for recruitment of proteins required for DNA damage signaling and repair. Gamma-H2A is removed from the DNA prior to the strand invasion-primer extension step of the repair process and subsequently dephosphorylated. Dephosphorylation is necessary for efficient recovery from the DNA damage checkpoint. Acetylated by ESA1 to form H2AK4ac and H2AK7ac.

The protein resides in the nucleus. It localises to the chromosome. Core component of nucleosome which plays a central role in DNA double strand break (DSB) repair. Nucleosomes wrap and compact DNA into chromatin, limiting DNA accessibility to the cellular machineries which require DNA as a template. Histones thereby play a central role in transcription regulation, DNA repair, DNA replication and chromosomal stability. DNA accessibility is regulated via a complex set of post-translational modifications of histones, also called histone code, and nucleosome remodeling. This Phaeosphaeria nodorum (strain SN15 / ATCC MYA-4574 / FGSC 10173) (Glume blotch fungus) protein is Histone H2A (HTA1).